Here is a 498-residue protein sequence, read N- to C-terminus: Glycerol kinase (498 aa).

An ADP-binding site is contributed by Thr-13. ATP-binding residues include Thr-13, Thr-14, and Ser-15. Position 13 (Thr-13) interacts with sn-glycerol 3-phosphate. ADP is bound at residue Arg-17. Sn-glycerol 3-phosphate-binding residues include Arg-83, Glu-84, Tyr-135, and Asp-244. Glycerol-binding residues include Arg-83, Glu-84, Tyr-135, Asp-244, and Gln-245. 2 residues coordinate ADP: Thr-266 and Gly-309. Residues Thr-266, Gly-309, Gln-313, and Gly-410 each contribute to the ATP site. Residues Gly-410 and Asn-414 each contribute to the ADP site.

The protein belongs to the FGGY kinase family. Homotetramer and homodimer (in equilibrium).

It carries out the reaction glycerol + ATP = sn-glycerol 3-phosphate + ADP + H(+). It participates in polyol metabolism; glycerol degradation via glycerol kinase pathway; sn-glycerol 3-phosphate from glycerol: step 1/1. Its activity is regulated as follows. Activated by phosphorylation and inhibited by fructose 1,6-bisphosphate (FBP). In terms of biological role, key enzyme in the regulation of glycerol uptake and metabolism. Catalyzes the phosphorylation of glycerol to yield sn-glycerol 3-phosphate. The protein is Glycerol kinase of Symbiobacterium thermophilum (strain DSM 24528 / JCM 14929 / IAM 14863 / T).